The sequence spans 349 residues: Protein RecA (349 aa).

67–74 lines the ATP pocket; it reads GPESSGKT.

This sequence belongs to the RecA family.

It localises to the cytoplasm. In terms of biological role, can catalyze the hydrolysis of ATP in the presence of single-stranded DNA, the ATP-dependent uptake of single-stranded DNA by duplex DNA, and the ATP-dependent hybridization of homologous single-stranded DNAs. It interacts with LexA causing its activation and leading to its autocatalytic cleavage. This Chlamydia abortus (strain DSM 27085 / S26/3) (Chlamydophila abortus) protein is Protein RecA.